We begin with the raw amino-acid sequence, 100 residues long: Large ribosomal subunit protein uL23 (100 aa).

The protein belongs to the universal ribosomal protein uL23 family. Part of the 50S ribosomal subunit. Contacts protein L29, and trigger factor when it is bound to the ribosome.

Its function is as follows. One of the early assembly proteins it binds 23S rRNA. One of the proteins that surrounds the polypeptide exit tunnel on the outside of the ribosome. Forms the main docking site for trigger factor binding to the ribosome. The protein is Large ribosomal subunit protein uL23 of Buchnera aphidicola subsp. Acyrthosiphon pisum (strain 5A).